The following is a 139-amino-acid chain: Large-conductance mechanosensitive channel (139 aa).

The next 2 membrane-spanning stretches (helical) occupy residues 14–34 and 86–106; these read VVDM…VKSL and GLFI…FLLI.

Belongs to the MscL family. In terms of assembly, homopentamer.

The protein localises to the cell inner membrane. Functionally, channel that opens in response to stretch forces in the membrane lipid bilayer. May participate in the regulation of osmotic pressure changes within the cell. This is Large-conductance mechanosensitive channel from Methylobacillus flagellatus (strain ATCC 51484 / DSM 6875 / VKM B-1610 / KT).